A 196-amino-acid chain; its full sequence is Ribosome maturation factor RimP (196 aa).

Residues leucine 164–glutamate 196 are disordered. A compositionally biased stretch (basic residues) spans glycine 173–lysine 182.

Belongs to the RimP family.

The protein localises to the cytoplasm. Functionally, required for maturation of 30S ribosomal subunits. This Xanthomonas campestris pv. campestris (strain B100) protein is Ribosome maturation factor RimP.